A 126-amino-acid polypeptide reads, in one-letter code: Fatty acid-binding protein, liver (126 aa).

An N-acetylalanine modification is found at A2.

This sequence belongs to the calycin superfamily. Fatty-acid binding protein (FABP) family. Liver.

It localises to the cytoplasm. Functionally, binds free fatty acids and their coenzyme A derivatives, bilirubin, and some other small molecules in the cytoplasm. May be involved in intracellular lipid transport this L-FABP binds only one fatty acid/molecule. Has more affinity for trans-parinaric acid than for cis-parinaric acid. The polypeptide is Fatty acid-binding protein, liver (fabp1) (Rhamdia sapo (South American catfish)).